The primary structure comprises 268 residues: Taurine import ATP-binding protein TauB (268 aa).

In terms of domain architecture, ABC transporter spans Leu-4–Val-236. Position 41–48 (Gly-41–Thr-48) interacts with ATP.

Belongs to the ABC transporter superfamily. Taurine importer (TC 3.A.1.17.1) family. The complex is composed of two ATP-binding proteins (TauB), two transmembrane proteins (TauC) and a solute-binding protein (TauA).

Its subcellular location is the cell inner membrane. The enzyme catalyses taurine(out) + ATP + H2O = taurine(in) + ADP + phosphate + H(+). In terms of biological role, part of the ABC transporter complex TauABC involved in taurine import. Responsible for energy coupling to the transport system. This is Taurine import ATP-binding protein TauB from Roseobacter denitrificans (strain ATCC 33942 / OCh 114) (Erythrobacter sp. (strain OCh 114)).